Reading from the N-terminus, the 85-residue chain is Small ribosomal subunit protein bS16 (85 aa).

Belongs to the bacterial ribosomal protein bS16 family.

The polypeptide is Small ribosomal subunit protein bS16 (Pelobacter propionicus (strain DSM 2379 / NBRC 103807 / OttBd1)).